Reading from the N-terminus, the 429-residue chain is Histidine--tRNA ligase (429 aa).

The protein belongs to the class-II aminoacyl-tRNA synthetase family. Homodimer.

It is found in the cytoplasm. It catalyses the reaction tRNA(His) + L-histidine + ATP = L-histidyl-tRNA(His) + AMP + diphosphate + H(+). In Chlorobium phaeobacteroides (strain DSM 266 / SMG 266 / 2430), this protein is Histidine--tRNA ligase.